A 571-amino-acid polypeptide reads, in one-letter code: Sulfite reductase [NADPH] hemoprotein beta-component (571 aa).

Positions 435, 441, 480, and 484 each coordinate [4Fe-4S] cluster. A siroheme-binding site is contributed by Cys484.

It belongs to the nitrite and sulfite reductase 4Fe-4S domain family. In terms of assembly, alpha(8)-beta(8). The alpha component is a flavoprotein, the beta component is a hemoprotein. It depends on siroheme as a cofactor. Requires [4Fe-4S] cluster as cofactor.

It catalyses the reaction hydrogen sulfide + 3 NADP(+) + 3 H2O = sulfite + 3 NADPH + 4 H(+). The protein operates within sulfur metabolism; hydrogen sulfide biosynthesis; hydrogen sulfide from sulfite (NADPH route): step 1/1. Functionally, component of the sulfite reductase complex that catalyzes the 6-electron reduction of sulfite to sulfide. This is one of several activities required for the biosynthesis of L-cysteine from sulfate. In Dickeya chrysanthemi (strain Ech1591) (Dickeya zeae (strain Ech1591)), this protein is Sulfite reductase [NADPH] hemoprotein beta-component.